We begin with the raw amino-acid sequence, 365 residues long: Delta(7)-sterol 5(6)-desaturase ERG3 (365 aa).

At 1–92 (MDLVLEVADH…LLPRSSILRE (92 aa)) the chain is on the cytoplasmic side. Residues 93 to 113 (FLSLWVIVTIFGLLLYLFTAS) form a helical membrane-spanning segment. The Lumenal portion of the chain corresponds to 114-140 (LSYVFVFDKSIFNHPRYLKNQMAMEIK). A helical membrane pass occupies residues 141–161 (LAVSAIPWMSMLTVPWFVMEL). At 162-242 (NGHSKLYMKI…VDGFLQSISY (81 aa)) the chain is on the cytoplasmic side. The 125-residue stretch at 187 to 311 (TFIFFTDCGV…FTTLWDRLGG (125 aa)) folds into the Fatty acid hydroxylase domain. Residues 200-204 (HRWLH) carry the Histidine box-1 motif. Positions 213–217 (HKPHH) match the Histidine box-2 motif. Residues 243–263 (HIYPLILPLHKVSYLILFTFV) form a helical membrane-spanning segment. The Lumenal segment spans residues 264–365 (NFWTVMIHDG…ENDPNTKKNN (102 aa)). A Histidine box-3 motif is present at residues 288–292 (HTVHH). Residues Lys-324 and Lys-344 each participate in a glycyl lysine isopeptide (Lys-Gly) (interchain with G-Cter in ubiquitin) cross-link.

Belongs to the sterol desaturase family. As to quaternary structure, interacts with ERG28. It depends on Fe cation as a cofactor.

Its subcellular location is the endoplasmic reticulum membrane. The catalysed reaction is episterol + 2 Fe(II)-[cytochrome b5] + O2 + 2 H(+) = 5-dehydroepisterol + 2 Fe(III)-[cytochrome b5] + 2 H2O. It participates in steroid metabolism; ergosterol biosynthesis; ergosterol from zymosterol: step 3/5. C-5 sterol desaturase; part of the third module of ergosterol biosynthesis pathway that includes the late steps of the pathway. ERG3 catalyzes the introduction of a C-5 double bond in the B ring to produce 5-dehydroepisterol. The third module or late pathway involves the ergosterol synthesis itself through consecutive reactions that mainly occur in the endoplasmic reticulum (ER) membrane. Firstly, the squalene synthase ERG9 catalyzes the condensation of 2 farnesyl pyrophosphate moieties to form squalene, which is the precursor of all steroids. Squalene synthase is crucial for balancing the incorporation of farnesyl diphosphate (FPP) into sterol and nonsterol isoprene synthesis. Secondly, the squalene epoxidase ERG1 catalyzes the stereospecific oxidation of squalene to (S)-2,3-epoxysqualene, which is considered to be a rate-limiting enzyme in steroid biosynthesis. Then, the lanosterol synthase ERG7 catalyzes the cyclization of (S)-2,3 oxidosqualene to lanosterol, a reaction that forms the sterol core. In the next steps, lanosterol is transformed to zymosterol through a complex process involving various demethylation, reduction and desaturation reactions. The lanosterol 14-alpha-demethylase ERG11 (also known as CYP51) catalyzes C14-demethylation of lanosterol to produce 4,4'-dimethyl cholesta-8,14,24-triene-3-beta-ol, which is critical for ergosterol biosynthesis. The C-14 reductase ERG24 reduces the C14=C15 double bond of 4,4-dimethyl-cholesta-8,14,24-trienol to produce 4,4-dimethyl-cholesta-8,24-dienol. 4,4-dimethyl-cholesta-8,24-dienol is substrate of the C-4 demethylation complex ERG25-ERG26-ERG27 in which ERG25 catalyzes the three-step monooxygenation required for the demethylation of 4,4-dimethyl and 4alpha-methylsterols, ERG26 catalyzes the oxidative decarboxylation that results in a reduction of the 3-beta-hydroxy group at the C-3 carbon to an oxo group, and ERG27 is responsible for the reduction of the keto group on the C-3. ERG28 has a role as a scaffold to help anchor ERG25, ERG26 and ERG27 to the endoplasmic reticulum and ERG29 regulates the activity of the iron-containing C4-methylsterol oxidase ERG25. Then, the sterol 24-C-methyltransferase ERG6 catalyzes the methyl transfer from S-adenosyl-methionine to the C-24 of zymosterol to form fecosterol. The C-8 sterol isomerase ERG2 catalyzes the reaction which results in unsaturation at C-7 in the B ring of sterols and thus converts fecosterol to episterol. The sterol-C5-desaturase ERG3 then catalyzes the introduction of a C-5 double bond in the B ring to produce 5-dehydroepisterol. The C-22 sterol desaturase ERG5 further converts 5-dehydroepisterol into ergosta-5,7,22,24(28)-tetraen-3beta-ol by forming the C-22(23) double bond in the sterol side chain. Finally, ergosta-5,7,22,24(28)-tetraen-3beta-ol is substrate of the C-24(28) sterol reductase ERG4 to produce ergosterol. The sequence is that of Delta(7)-sterol 5(6)-desaturase ERG3 from Saccharomyces cerevisiae (strain ATCC 204508 / S288c) (Baker's yeast).